Consider the following 172-residue polypeptide: RNA silencing suppressor p19 (172 aa).

The segment covering 1 to 15 has biased composition (basic and acidic residues); it reads MERAIQGNDAREQAY. Residues 1–38 form a disordered region; that stretch reads MERAIQGNDAREQAYGERWNGGPGGSTSPFQLPDESPS.

It belongs to the tombusvirus protein p19 family. As to quaternary structure, homodimer.

Functionally, viral suppressor of RNA silencing which binds specifically to silencing RNAs (siRNAs). Acts as a molecular caliper to specifically select siRNAs based on the length of the duplex region of the RNA. In Tomato bushy stunt virus (strain A23) (TBSV), this protein is RNA silencing suppressor p19.